The primary structure comprises 400 residues: Enoyl-[acyl-carrier-protein] reductase [NADH] 1 (400 aa).

NAD(+) is bound by residues 48–53 (GASSGY), 74–75 (FE), 111–112 (DA), and 139–140 (LA). Tyrosine 225 provides a ligand contact to substrate. The active-site Proton donor is the tyrosine 235. NAD(+) contacts are provided by residues lysine 244 and 273–275 (VVT).

Belongs to the TER reductase family. Monomer.

The enzyme catalyses a 2,3-saturated acyl-[ACP] + NAD(+) = a (2E)-enoyl-[ACP] + NADH + H(+). It participates in lipid metabolism; fatty acid biosynthesis. In terms of biological role, involved in the final reduction of the elongation cycle of fatty acid synthesis (FAS II). Catalyzes the reduction of a carbon-carbon double bond in an enoyl moiety that is covalently linked to an acyl carrier protein (ACP). This is Enoyl-[acyl-carrier-protein] reductase [NADH] 1 from Vibrio parahaemolyticus serotype O3:K6 (strain RIMD 2210633).